Consider the following 466-residue polypeptide: Soluble pyridine nucleotide transhydrogenase (466 aa).

36–45 (ERYHNVGGGC) is an FAD binding site.

It belongs to the class-I pyridine nucleotide-disulfide oxidoreductase family. FAD serves as cofactor.

It is found in the cytoplasm. The catalysed reaction is NAD(+) + NADPH = NADH + NADP(+). In terms of biological role, conversion of NADPH, generated by peripheral catabolic pathways, to NADH, which can enter the respiratory chain for energy generation. In Enterobacter sp. (strain 638), this protein is Soluble pyridine nucleotide transhydrogenase.